A 95-amino-acid polypeptide reads, in one-letter code: Small ribosomal subunit protein bS18 (95 aa).

It belongs to the bacterial ribosomal protein bS18 family. Part of the 30S ribosomal subunit. Forms a tight heterodimer with protein bS6.

Binds as a heterodimer with protein bS6 to the central domain of the 16S rRNA, where it helps stabilize the platform of the 30S subunit. This Acidiphilium cryptum (strain JF-5) protein is Small ribosomal subunit protein bS18.